The chain runs to 140 residues: Arsenate reductase (140 aa).

Cys-11 acts as the Nucleophile; cysteine thioarsenate intermediate in catalysis.

The protein belongs to the ArsC family.

The enzyme catalyses [glutaredoxin]-dithiol + arsenate + glutathione + H(+) = glutathionyl-S-S-[glutaredoxin] + arsenite + H2O. Its function is as follows. Involved in resistance to arsenate. Catalyzes the reduction of arsenate [As(V)] to arsenite [As(III)]. The resulting arsenite is then extruded from the cell via the aquaglyceroporin AqpS. Does not display antimonate reductase activity. This is Arsenate reductase from Rhizobium meliloti (strain 1021) (Ensifer meliloti).